Consider the following 488-residue polypeptide: UDP-N-acetylmuramate--L-alanine ligase (488 aa).

127-133 serves as a coordination point for ATP; sequence GTHGKTT.

It belongs to the MurCDEF family.

It localises to the cytoplasm. The catalysed reaction is UDP-N-acetyl-alpha-D-muramate + L-alanine + ATP = UDP-N-acetyl-alpha-D-muramoyl-L-alanine + ADP + phosphate + H(+). Its pathway is cell wall biogenesis; peptidoglycan biosynthesis. Cell wall formation. In Shewanella oneidensis (strain ATCC 700550 / JCM 31522 / CIP 106686 / LMG 19005 / NCIMB 14063 / MR-1), this protein is UDP-N-acetylmuramate--L-alanine ligase.